We begin with the raw amino-acid sequence, 1057 residues long: MPGSRRVRPRLRALLLLPPLLLLRSGHASDLTVAVVLPLTNTSYPWSWARVGPAVELALGRVKARPDLLPGWTVRMVLGSSENAAGVCSDTAAPLAAVDLKWEHSPAVFLGPGCVYSAAPVGRFTAHWRVPLLTAGAPALGIGVKDEYALTTRTGPSHVKLGDFVTALHRRLGWEHQALVLYADRLGDDRPCFFIVEGLYMRVRERLNITVNHQEFVEGDPDHYTKLLRTVQRKGRVIYICSSPDAFRNLMLLALDAGLTGEDYVFFHLDVFGQSLQGAQGPVPRKPWERDDGQDRRARQAFQAAKIITYKEPDNPEYLEFLKQLKLLADKKFNFTMEDGLKNIIPASFHDGLLLYVQAVTETLAQGGTVTDGENITQRMWNRSFQGVTGYLKIDRNGDRDTDFSLWDMDPETGAFRVVLNFNGTSQELMAVSEHRLYWPLGYPPPDIPKCGFDNEDPACNQDHFSTLEVLALVGSLSLVSFLIVSFFIYRKMQLEKELVSELWRVRWEDLQPSSLERHLRSAGSRLTLSGRGSNYGSLLTTEGQFQVFAKTAYYKGNLVAVKRVNRKRIELTRKVLFELKHMRDVQNEHLTRFVGACTDPPNICILTEYCPRGSLQDILENESITLDWMFRYSLTNDIVKGMLFLHNGAIGSHGNLKSSNCVVDGRFVLKITDYGLESFRDPEPEQGHTLFAKKLWTAPELLRMASPPARGSQAGDVYSFGIILQEIALRSGVFYVEGLDLSPKEIIERVTRGEQPPFRPSMDLQSHLEELGQLMQRCWAEDPQERPPFQQIRLALRKFNKENSSNILDNLLSRMEQYANNLEELVEERTQAYLEEKRKAEALLYQILPHSVAEQLKRGETVQAEAFDSVTIYFSDIVGFTALSAESTPMQVVTLLNDLYTCFDAVIDNFDVYKVETIGDAYMVVSGLPVRNGQLHAREVARMALALLDAVRSFRIRHRPQEQLRLRIGIHTGPVCAGVVGLKMPRYCLFGDTVNTASRMESNGEALRIHLSSETKAVLEEFDGFELELRGDVEMKGKGKVRTYWLLGERGCSTRG.

A signal peptide spans 1–28; sequence MPGSRRVRPRLRALLLLPPLLLLRSGHA. The Extracellular segment spans residues 29 to 469; that stretch reads SDLTVAVVLP…CNQDHFSTLE (441 aa). Asparagine 41 is a glycosylation site (N-linked (GlcNAc...) asparagine). 3 residues coordinate chloride: serine 81, glycine 113, and cysteine 114. Cystine bridges form between cysteine 88–cysteine 114 and cysteine 192–cysteine 241. N-linked (GlcNAc...) asparagine glycosylation is found at asparagine 208, asparagine 334, asparagine 375, asparagine 382, and asparagine 423. A disulfide bridge links cysteine 451 with cysteine 460. A helical membrane pass occupies residues 470 to 490; the sequence is VLALVGSLSLVSFLIVSFFIY. The Cytoplasmic portion of the chain corresponds to 491–1057; that stretch reads RKMQLEKELV…LGERGCSTRG (567 aa). Residues serine 515 and serine 525 each carry the phosphoserine modification. The 278-residue stretch at 524–801 folds into the Protein kinase domain; sequence GSRLTLSGRG…QIRLALRKFN (278 aa). A Phosphothreonine modification is found at threonine 528. A phosphoserine mark is found at serine 530, serine 534, and serine 538. Threonine 541 is modified (phosphothreonine). The Guanylate cyclase domain maps to 872–1002; sequence TIYFSDIVGF…DTVNTASRME (131 aa).

The protein belongs to the adenylyl cyclase class-4/guanylyl cyclase family. Homodimer. Post-translationally, phosphorylation of the protein kinase-like domain is required for full activation by ANP.

Its subcellular location is the membrane. The catalysed reaction is GTP = 3',5'-cyclic GMP + diphosphate. Its function is as follows. Receptor for the atrial natriuretic peptide NPPA/ANP and the brain natriuretic peptide NPPB/BNP which are potent vasoactive hormones playing a key role in cardiovascular homeostasis. Plays an essential role in the regulation of endothelial cell senescence and vascular aging. Upon activation by ANP or BNP, stimulates the production of cyclic guanosine monophosphate (cGMP) that promotes vascular tone and volume homeostasis by activation of protein kinase cGMP-dependent 1/PRKG1 and subsequently PRKAA1, thereby controlling blood pressure and maintaining cardiovascular homeostasis. In Mus musculus (Mouse), this protein is Atrial natriuretic peptide receptor 1 (Npr1).